Consider the following 628-residue polypeptide: EF-hand calcium-binding domain-containing protein 7 (628 aa).

Residues 1–22 (MASNPGSDAALGTQNPLLSGSP) show a composition bias toward polar residues. The disordered stretch occupies residues 1–24 (MASNPGSDAALGTQNPLLSGSPRT). EF-hand domains follow at residues 102 to 137 (TSKA…RGEK) and 138 to 173 (MTQE…TSEQ). The interval 192–231 (QFGSHMEGSPERGPSPAPKPSPRVIRKNDQETFSSKGDTS) is disordered. Ser200 and Ser212 each carry phosphoserine. Residues 222-231 (ETFSSKGDTS) are compositionally biased toward polar residues. One can recognise an EF-hand 3 domain in the interval 402–437 (EFRSTLSEIFEVIDLDGNGLISLEEYNFFELRTSGE). Asp415, Asp417, Asn419, and Glu426 together coordinate Ca(2+).

Component of the EvC complex composed of EFCAB7, IQCE, EVC2 and EVC; built from two subcomplexes, EVC2:EVC and EFCAB7:IQCE. Interacts (via EF-hand 1 and 2) with IQCE (via N-terminus); this interaction anchors the EVC-EVC2 complex in a signaling microdomain at the base of cilia and stimulates the Hedgehog (Hh) pathway. Interacts with EVC2 (via N-terminal end). Interacts with EVC.

It localises to the cell projection. The protein resides in the cilium membrane. Component of the EvC complex that positively regulates ciliary Hedgehog (Hh) signaling. Required for the localization of the EVC2:EVC subcomplex at the base of primary cilia. The sequence is that of EF-hand calcium-binding domain-containing protein 7 (Efcab7) from Mus musculus (Mouse).